A 215-amino-acid chain; its full sequence is UPF0502 protein YceH (215 aa).

N6-acetyllysine is present on Lys80.

The protein belongs to the UPF0502 family.

The chain is UPF0502 protein YceH from Escherichia coli (strain K12 / MC4100 / BW2952).